Consider the following 90-residue polypeptide: Small ribosomal subunit protein uS15 (90 aa).

The protein belongs to the universal ribosomal protein uS15 family. Part of the 30S ribosomal subunit. Forms a bridge to the 50S subunit in the 70S ribosome, contacting the 23S rRNA.

Functionally, one of the primary rRNA binding proteins, it binds directly to 16S rRNA where it helps nucleate assembly of the platform of the 30S subunit by binding and bridging several RNA helices of the 16S rRNA. In terms of biological role, forms an intersubunit bridge (bridge B4) with the 23S rRNA of the 50S subunit in the ribosome. This Helicobacter pylori (strain J99 / ATCC 700824) (Campylobacter pylori J99) protein is Small ribosomal subunit protein uS15.